The sequence spans 451 residues: Vitamin D3 receptor (451 aa).

A DNA-binding region (nuclear receptor) is located at residues Pro44–Met112. Residues Cys47, Cys50, Cys64, Cys67, Cys83, Cys89, Cys99, and Cys102 each contribute to the Zn(2+) site. 2 NR C4-type zinc fingers span residues Cys47 to Cys67 and Cys83 to Cys107. 2 hinge regions span residues Met113–Glu149 and Asp120–Glu149. Positions Glu150 to Gly447 constitute an NR LBD domain. Ser261 serves as a coordination point for calcitriol. The segment at Lys270–Lys288 is interaction with coactivator LXXLL motif. The calcitriol site is built by Arg298, Ser302, His329, and His421. A 9aaTAD motif is present at residues Pro440 to Asn448.

This sequence belongs to the nuclear hormone receptor family. NR1 subfamily. In terms of assembly, homodimer in the absence of bound vitamin D3. Heterodimer with RXRA after vitamin D3 binding. In terms of tissue distribution, expressed in kidney and intestine.

It is found in the nucleus. The protein resides in the cytoplasm. Nuclear receptor for calcitriol, the active form of vitamin D3 which mediates the action of this vitamin on cells. Enters the nucleus upon vitamin D3 binding where it forms heterodimers with the retinoid X receptor/RXR. The VDR-RXR heterodimers bind to specific response elements on DNA and activate the transcription of vitamin D3-responsive target genes. Plays a central role in calcium homeostasis. Also functions as a receptor for the secondary bile acid lithocholic acid (LCA) and its metabolites. The protein is Vitamin D3 receptor (VDR) of Gallus gallus (Chicken).